The sequence spans 129 residues: Sulfurtransferase TusD (129 aa).

Cysteine 79 serves as the catalytic Cysteine persulfide intermediate.

Belongs to the DsrE/TusD family. Heterohexamer, formed by a dimer of trimers. The hexameric TusBCD complex contains 2 copies each of TusB, TusC and TusD. The TusBCD complex interacts with TusE.

The protein resides in the cytoplasm. Its function is as follows. Part of a sulfur-relay system required for 2-thiolation of 5-methylaminomethyl-2-thiouridine (mnm(5)s(2)U) at tRNA wobble positions. Accepts sulfur from TusA and transfers it in turn to TusE. This chain is Sulfurtransferase TusD, found in Pectobacterium carotovorum subsp. carotovorum (strain PC1).